A 196-amino-acid polypeptide reads, in one-letter code: Holliday junction branch migration complex subunit RuvA (196 aa).

The domain I stretch occupies residues 1–63 (MINKIYGKIV…DDDVKLFGFL (63 aa)). The segment at 64–142 (NISEREVFED…KGDESSSYML (79 aa)) is domain II. Lys143 is a region of interest (flexible linker). The domain III stretch occupies residues 143–196 (KFKELEQSIVNMGFDRKLVVVAFREIMLSDKFLILKEAEQEQFLFTETLKRLSV).

The protein belongs to the RuvA family. Homotetramer. Forms an RuvA(8)-RuvB(12)-Holliday junction (HJ) complex. HJ DNA is sandwiched between 2 RuvA tetramers; dsDNA enters through RuvA and exits via RuvB. An RuvB hexamer assembles on each DNA strand where it exits the tetramer. Each RuvB hexamer is contacted by two RuvA subunits (via domain III) on 2 adjacent RuvB subunits; this complex drives branch migration. In the full resolvosome a probable DNA-RuvA(4)-RuvB(12)-RuvC(2) complex forms which resolves the HJ.

It is found in the cytoplasm. Its function is as follows. The RuvA-RuvB-RuvC complex processes Holliday junction (HJ) DNA during genetic recombination and DNA repair, while the RuvA-RuvB complex plays an important role in the rescue of blocked DNA replication forks via replication fork reversal (RFR). RuvA specifically binds to HJ cruciform DNA, conferring on it an open structure. The RuvB hexamer acts as an ATP-dependent pump, pulling dsDNA into and through the RuvAB complex. HJ branch migration allows RuvC to scan DNA until it finds its consensus sequence, where it cleaves and resolves the cruciform DNA. The chain is Holliday junction branch migration complex subunit RuvA from Borrelia duttonii (strain Ly).